The sequence spans 189 residues: Calcium and integrin-binding family member 2 (189 aa).

EF-hand domains follow at residues 68–103, 105–140, and 146–181; these read RENPFRRRICEAFSRDGQGNLSFEDFLDALSVFSEQ, PRDIKVFYAFKIYDFDQDGFIGHADLMSCLTTMTKN, and EHQQIADKVIEEADVDGDGKLSILEFEHVILRAPDF. Residues D118, D120, D122, D129, D159, D161, D163, K165, and E170 each coordinate Ca(2+).

As to quaternary structure, monomer. Homodimer.

It is found in the cytoplasm. Its function is as follows. Calcium- and integrin-binding protein. Plays a role in intracellular calcium homeostasis. Critical for proper photoreceptor cell maintenance and function. Required for prevention of light-dependent retinal degeneration. This is Calcium and integrin-binding family member 2 from Drosophila melanogaster (Fruit fly).